A 578-amino-acid chain; its full sequence is Proline--tRNA ligase (578 aa).

It belongs to the class-II aminoacyl-tRNA synthetase family. ProS type 1 subfamily. Homodimer.

It is found in the cytoplasm. It catalyses the reaction tRNA(Pro) + L-proline + ATP = L-prolyl-tRNA(Pro) + AMP + diphosphate. Its function is as follows. Catalyzes the attachment of proline to tRNA(Pro) in a two-step reaction: proline is first activated by ATP to form Pro-AMP and then transferred to the acceptor end of tRNA(Pro). As ProRS can inadvertently accommodate and process non-cognate amino acids such as alanine and cysteine, to avoid such errors it has two additional distinct editing activities against alanine. One activity is designated as 'pretransfer' editing and involves the tRNA(Pro)-independent hydrolysis of activated Ala-AMP. The other activity is designated 'posttransfer' editing and involves deacylation of mischarged Ala-tRNA(Pro). The misacylated Cys-tRNA(Pro) is not edited by ProRS. The polypeptide is Proline--tRNA ligase (Burkholderia mallei (strain ATCC 23344)).